Reading from the N-terminus, the 370-residue chain is Platelet-derived growth factor D (370 aa).

The N-terminal stretch at 1 to 23 (MHRLILVSILVCANFCCYRDTFA) is a signal peptide. The CUB domain maps to 52–170 (RDENIRVTGT…PGFKIYYSFV (119 aa)). A disulfide bond links Cys109 and Cys131. Asn276 carries N-linked (GlcNAc...) asparagine glycosylation. Intrachain disulfides connect Cys302–Cys360 and Cys306–Cys362.

This sequence belongs to the PDGF/VEGF growth factor family. As to quaternary structure, homodimer; disulfide-linked. Interacts with PDGFRB homodimers, and with heterodimers formed by PDGFRA and PDGFRB. Activated by proteolytic cleavage. Proteolytic removal of the N-terminal CUB domain releasing the core domain is necessary for unmasking the receptor-binding epitopes of the core domain. Cleavage after Arg-247 or Arg-249 by urokinase plasminogen activator gives rise to the active form. As to expression, widely expressed. Expressed at high levels in the kidney, adrenal glands, eye and CNS. In the kidney the localization is confined to arterial and arteriolar vascular smooth muscle cells and is also detected at low levels in the glomeruli In the eye in the anterior segment it is localized to the iris and ciliary body. In the retina localizes intensely to the outer plexiform layer, which contains photoreceptor axons and the synaptic layer between photoreceptors and second order neurons. In the spinal cord, prominently expressed in the motorneurons.

It localises to the secreted. Functionally, growth factor that plays an essential role in the regulation of embryonic development, cell proliferation, cell migration, survival and chemotaxis. Potent mitogen for cells of mesenchymal origin. Plays an important role in wound healing. Induces macrophage recruitment, increased interstitial pressure, and blood vessel maturation during angiogenesis. May play an important role in control of lens epithelial cell proliferation. Can initiate events that lead to a mesangial proliferative glomerulonephritis, including influx of monocytes and macrophages and production of extracellular matrix. The protein is Platelet-derived growth factor D (Pdgfd) of Rattus norvegicus (Rat).